A 449-amino-acid polypeptide reads, in one-letter code: tRNA-2-methylthio-N(6)-dimethylallyladenosine synthase (449 aa).

Residues 4 to 119 (RTFHIETFGC…APQALDRLVE (116 aa)) enclose the MTTase N-terminal domain. 6 residues coordinate [4Fe-4S] cluster: C13, C48, C82, C158, C162, and C165. A Radical SAM core domain is found at 144 to 375 (GAVPASVFVN…QTLQNRLTER (232 aa)). Residues 378 to 446 (QDMVGKKVEV…KHSLLAEQAG (69 aa)) enclose the TRAM domain.

Belongs to the methylthiotransferase family. MiaB subfamily. As to quaternary structure, monomer. It depends on [4Fe-4S] cluster as a cofactor.

It localises to the cytoplasm. It catalyses the reaction N(6)-dimethylallyladenosine(37) in tRNA + (sulfur carrier)-SH + AH2 + 2 S-adenosyl-L-methionine = 2-methylsulfanyl-N(6)-dimethylallyladenosine(37) in tRNA + (sulfur carrier)-H + 5'-deoxyadenosine + L-methionine + A + S-adenosyl-L-homocysteine + 2 H(+). Functionally, catalyzes the methylthiolation of N6-(dimethylallyl)adenosine (i(6)A), leading to the formation of 2-methylthio-N6-(dimethylallyl)adenosine (ms(2)i(6)A) at position 37 in tRNAs that read codons beginning with uridine. This is tRNA-2-methylthio-N(6)-dimethylallyladenosine synthase from Nitratidesulfovibrio vulgaris (strain DP4) (Desulfovibrio vulgaris).